A 443-amino-acid polypeptide reads, in one-letter code: Probable lysophospholipase BODYGUARD 5 (443 aa).

The first 52 residues, 1-52, serve as a signal peptide directing secretion; that stretch reads MITSSFSEKCTSVINGAPSWAVFFLFDLLDYFLCIVFRFLDEVMEEKSESCH. Cys-53 carries the N-palmitoyl cysteine lipid modification. The AB hydrolase-1 domain maps to 163 to 268; that stretch reads VIFVHGFLAS…VKSVALVAPP (106 aa). His-167 is an active-site residue. The Nucleophile role is filled by Ser-242. Residues Asp-387 and His-415 each act as charge relay system in the active site.

It localises to the cell membrane. The protein localises to the secreted. Its subcellular location is the cell wall. In terms of biological role, involved in cuticle development and morphogenesis. In Arabidopsis thaliana (Mouse-ear cress), this protein is Probable lysophospholipase BODYGUARD 5.